Here is a 243-residue protein sequence, read N- to C-terminus: ABC transporter arginine-binding protein 1 (243 aa).

An N-terminal signal peptide occupies residues Met1–Ala19.

Belongs to the bacterial solute-binding protein 3 family. As to quaternary structure, the complex is composed of two ATP-binding proteins (ArtP), two transmembrane proteins (ArtM and ArtQ) and two solute-binding proteins (ArtJ and ArtI).

It is found in the periplasm. In terms of biological role, part of the ABC transporter complex ArtPIQMJ involved in arginine transport. Binds L-arginine with high affinity. This chain is ABC transporter arginine-binding protein 1 (artJ), found in Escherichia coli (strain K12).